A 341-amino-acid chain; its full sequence is Serpentine receptor class epsilon-12 (341 aa).

Helical transmembrane passes span 30-50, 57-77, 101-121, 140-160, 167-187, 230-250, and 262-282; these read TAFY…LFSA, FTLV…AIIV, AMTF…FSIL, YISY…AILL, IFVV…NQFL, LNFI…SVLF, and ICSL…PQIM.

This sequence belongs to the nematode receptor-like protein sre family.

It localises to the membrane. The chain is Serpentine receptor class epsilon-12 (sre-12) from Caenorhabditis elegans.